We begin with the raw amino-acid sequence, 247 residues long: MLLLRSALTRALASRTLAPQVCSSFATGPRQYDGIFYEFRSYYLKPSKMNEFLENFKKNAHLRTAHSELVGYWSVEFGGRMNTVFHIWKYDNFAHRTEVRKALAKDKEWQEQFLIPNLALIDKQESEITYLVPWCKLEKPPKEGVYELATFQMKPGGPALWGDAFKRAVHAHVNLGYTKLVGVFHTEYGALNRVHVLWWNESADSRAAGRHKSHEDPRVVAAVRESVNYLVSQQNMLLIPTSFSPLK.

N6-acetyllysine is present on residues lysine 48 and lysine 166.

This sequence belongs to the NipSnap family.

Its subcellular location is the cytoplasm. The protein localises to the cytosol. The protein is Protein NipSnap homolog 3A (NIPSNAP3A) of Pongo abelii (Sumatran orangutan).